A 70-amino-acid chain; its full sequence is Turripeptide OL179 (70 aa).

The signal sequence occupies residues 1–21; it reads MMAKQVVVLLALLLLLPIVTA. Residues 22 to 32 constitute a propeptide that is removed on maturation; sequence SMGDASGRTGR.

Expressed by the venom duct.

Its subcellular location is the secreted. In terms of biological role, acts as a neurotoxin by inhibiting an ion channel. This chain is Turripeptide OL179, found in Iotyrris olangoensis (Sea snail).